Here is a 479-residue protein sequence, read N- to C-terminus: 6-phosphogluconate dehydrogenase, decarboxylating (479 aa).

NADP(+)-binding positions include 10–15, 33–35, 75–77, and Asn-103; these read GLAVMG, NRS, and IKA. Substrate is bound by residues Asn-103 and 129–131; that span reads SGG. Lys-183 (proton acceptor) is an active-site residue. 186-187 provides a ligand contact to substrate; that stretch reads HN. Catalysis depends on Glu-190, which acts as the Proton donor. 5 residues coordinate substrate: Tyr-191, Lys-260, Arg-287, Arg-447, and His-453.

The protein belongs to the 6-phosphogluconate dehydrogenase family. As to quaternary structure, homodimer.

It carries out the reaction 6-phospho-D-gluconate + NADP(+) = D-ribulose 5-phosphate + CO2 + NADPH. Its pathway is carbohydrate degradation; pentose phosphate pathway; D-ribulose 5-phosphate from D-glucose 6-phosphate (oxidative stage): step 3/3. Functionally, catalyzes the oxidative decarboxylation of 6-phosphogluconate to ribulose 5-phosphate and CO(2), with concomitant reduction of NADP to NADPH. In Chlamydia muridarum (strain MoPn / Nigg), this protein is 6-phosphogluconate dehydrogenase, decarboxylating (gnd).